A 578-amino-acid chain; its full sequence is MAVTEAENPLLGEITCGTLLQKLQEIWDEVGESDEERDKLLLQIEEECLNVYKKKVELAAKSRAELLQTLSDATVELSNLTTALGEKSYIDIPDKTSGTIKEQLSAIAPALEQLWQQKEERVRAFSDVQSQIQKICEEIAGGLNNGPHVVDETDLSLKRLDDFQRKLQELQKEKSDRLQKVLEFVSTVHDLCAVLRLDFLSTVTEVHPSLDEANGVQTKSISNETLARLAKTVLTLKEDKMQRLKKLQELATQLTDLWNLMDTSDEERELFDHVTSNISASVHEVTASGALALDLIEQAEVEVDRLDQLKSSRMKEIAFKKQSELEEIYARAHIEIKPEVVRERIMSLIDAGNTEPTELLADMDSQIAKAKEEAFSRKEILDRVEKWMSACEEESWLEDYNRDQNRYSASRGAHLNLKRAEKARILVSKITAMVDTLIAKTRAWEEENSMSFEYDGVPLLAMLDEYTMLRQEREDEKRRLKEQKKQQEQPHTDQESAFGSKPSPARPVSAKKPVGTRVNGGGLNETPMRRLSMNSNQNGSKSKRDSLNKIASPSNIVANTKDDAASPVSRADPVMASP.

Coiled-coil stretches lie at residues Ala64–Leu84, Asp151–Phe184, Thr235–Leu257, Ala290–Ser312, and Ala461–Gln489. Basic and acidic residues predominate over residues Arg473–Gln494. Residues Arg473–Pro578 are disordered. Ser503 and Ser532 each carry phosphoserine. Over residues Lys549–Ala558 the composition is skewed to polar residues. Phosphoserine occurs at positions 566, 569, and 577.

The protein belongs to the MAP65/ASE1 family. Forms a dimer. Binds to microtubules (MT). Bundles polymerized MT via the formation of 25-nm crossbridges with centrally located endocytic MT.

It localises to the nucleus. It is found in the cytoplasm. The protein localises to the cytoskeleton. The protein resides in the spindle pole. Its subcellular location is the phragmoplast. In terms of biological role, microtubule-associated protein that stabilize microtubules (MT). Involved in the regulation of MT organization and dynamics. Confers MT resistance to the drug propyzamide and cold conditions. This chain is 65-kDa microtubule-associated protein 2 (MAP65-2), found in Arabidopsis thaliana (Mouse-ear cress).